A 468-amino-acid polypeptide reads, in one-letter code: Putative BTB/POZ domain and WD-repeat protein R154 (468 aa).

Residues 14–85 (SDLQLIVEDS…FYGIDDKLPE (72 aa)) form the BTB domain. 3 WD repeats span residues 194–233 (HHSENITSLCYDNNNKRIIYGDLKGTIYAYDFFSNKIIFN), 354–398 (DEIG…LVKS), and 401–440 (LFDVPIISMTYSPNGDQLIVANCDREVRILNSDNYEIIYT).

Belongs to the mimivirus BTB/WD family.

The chain is Putative BTB/POZ domain and WD-repeat protein R154 from Acanthamoeba polyphaga (Amoeba).